Reading from the N-terminus, the 221-residue chain is Pleckstrin homology domain-containing family B member 2 (221 aa).

Residues 2 to 109 (AFVKSGWLLR…WKFTLQDSRT (108 aa)) form the PH domain. Position 20 (Lys-20) interacts with a 1,2-diacyl-sn-glycero-3-phospho-L-serine.

Highly expressed in brain, retina, heart and kidney. Detected at lower levels in lung, muscle and nerve.

It localises to the recycling endosome membrane. In terms of biological role, involved in retrograde transport of recycling endosomes. This chain is Pleckstrin homology domain-containing family B member 2 (Plekhb2), found in Mus musculus (Mouse).